Consider the following 70-residue polypeptide: Cytochrome c oxidase subunit 8B, mitochondrial (70 aa).

The N-terminal 24 residues, 1-24 (MLSLRPALRLLQAPLRCWAVPKAH), are a transit peptide targeting the mitochondrion. Residues 25-35 (VSAKPAETPTS) are Mitochondrial matrix-facing. The helical transmembrane segment at 36–59 (PAEQAVGLSFIFITFLGPAGWILS) threads the bilayer. At 60 to 70 (HVENYKKRPRA) the chain is on the mitochondrial intermembrane side.

This sequence belongs to the cytochrome c oxidase VIII family. Component of the cytochrome c oxidase (complex IV, CIV), a multisubunit enzyme composed of 14 subunits. The complex is composed of a catalytic core of 3 subunits MT-CO1, MT-CO2 and MT-CO3, encoded in the mitochondrial DNA, and 11 supernumerary subunits COX4I, COX5A, COX5B, COX6A, COX6B, COX6C, COX7A, COX7B, COX7C, COX8 and NDUFA4, which are encoded in the nuclear genome. The complex exists as a monomer or a dimer and forms supercomplexes (SCs) in the inner mitochondrial membrane with NADH-ubiquinone oxidoreductase (complex I, CI) and ubiquinol-cytochrome c oxidoreductase (cytochrome b-c1 complex, complex III, CIII), resulting in different assemblies (supercomplex SCI(1)III(2)IV(1) and megacomplex MCI(2)III(2)IV(2)).

It is found in the mitochondrion inner membrane. Its pathway is energy metabolism; oxidative phosphorylation. In terms of biological role, component of the cytochrome c oxidase, the last enzyme in the mitochondrial electron transport chain which drives oxidative phosphorylation. The respiratory chain contains 3 multisubunit complexes succinate dehydrogenase (complex II, CII), ubiquinol-cytochrome c oxidoreductase (cytochrome b-c1 complex, complex III, CIII) and cytochrome c oxidase (complex IV, CIV), that cooperate to transfer electrons derived from NADH and succinate to molecular oxygen, creating an electrochemical gradient over the inner membrane that drives transmembrane transport and the ATP synthase. Cytochrome c oxidase is the component of the respiratory chain that catalyzes the reduction of oxygen to water. Electrons originating from reduced cytochrome c in the intermembrane space (IMS) are transferred via the dinuclear copper A center (CU(A)) of subunit 2 and heme A of subunit 1 to the active site in subunit 1, a binuclear center (BNC) formed by heme A3 and copper B (CU(B)). The BNC reduces molecular oxygen to 2 water molecules using 4 electrons from cytochrome c in the IMS and 4 protons from the mitochondrial matrix. This is Cytochrome c oxidase subunit 8B, mitochondrial (COX8B) from Ateles belzebuth (White-bellied spider monkey).